A 294-amino-acid polypeptide reads, in one-letter code: MPWLQVRLAITPEQAETYEDALLEVGAVSVTFMDAEDQPIFEPDLGTTPLWSRTHLLALFEADTDETALLAHLALLTGGELPEHHIEEIADQDWERSWMDNFQPMRFGRRLWIVPSWHAAPEPDAVNLLLDPGLAFGTGTHPTTALCLEWLDGQELAGRQVLDFGCGSGILAIAALLLGAERAVGTDIDPQALEASRDNASRNGIEPARFPVYLPADLPRQQADVLVANILAGPLVSLAPQLTGLVRPGGLLALSGILAEQAEEVREAYSAHFDLDPTAEREGWLRISGRRRAD.

Positions 144, 165, 187, and 229 each coordinate S-adenosyl-L-methionine.

Belongs to the methyltransferase superfamily. PrmA family.

The protein localises to the cytoplasm. It catalyses the reaction L-lysyl-[protein] + 3 S-adenosyl-L-methionine = N(6),N(6),N(6)-trimethyl-L-lysyl-[protein] + 3 S-adenosyl-L-homocysteine + 3 H(+). Functionally, methylates ribosomal protein L11. The chain is Ribosomal protein L11 methyltransferase from Pseudomonas paraeruginosa (strain DSM 24068 / PA7) (Pseudomonas aeruginosa (strain PA7)).